Here is a 336-residue protein sequence, read N- to C-terminus: Phospho-N-acetylmuramoyl-pentapeptide-transferase (336 aa).

Helical transmembrane passes span L3 to I23, G53 to I73, S78 to L98, L118 to I138, V143 to V163, G174 to A194, F200 to N220, V226 to A246, W251 to V271, and A316 to F336.

It belongs to the glycosyltransferase 4 family. MraY subfamily. It depends on Mg(2+) as a cofactor.

The protein resides in the cell membrane. The catalysed reaction is UDP-N-acetyl-alpha-D-muramoyl-L-alanyl-gamma-D-glutamyl-L-lysyl-D-alanyl-D-alanine + di-trans,octa-cis-undecaprenyl phosphate = Mur2Ac(oyl-L-Ala-gamma-D-Glu-L-Lys-D-Ala-D-Ala)-di-trans,octa-cis-undecaprenyl diphosphate + UMP. Its pathway is cell wall biogenesis; peptidoglycan biosynthesis. In terms of biological role, catalyzes the initial step of the lipid cycle reactions in the biosynthesis of the cell wall peptidoglycan: transfers peptidoglycan precursor phospho-MurNAc-pentapeptide from UDP-MurNAc-pentapeptide onto the lipid carrier undecaprenyl phosphate, yielding undecaprenyl-pyrophosphoryl-MurNAc-pentapeptide, known as lipid I. The sequence is that of Phospho-N-acetylmuramoyl-pentapeptide-transferase from Streptococcus pyogenes serotype M6 (strain ATCC BAA-946 / MGAS10394).